The sequence spans 248 residues: 4-hydroxy-tetrahydrodipicolinate reductase (248 aa).

NAD(+) is bound by residues D32, 74 to 76 (GTT), and 99 to 102 (SANF). The active-site Proton donor/acceptor is H134. Position 135 (H135) interacts with (S)-2,3,4,5-tetrahydrodipicolinate. K138 (proton donor) is an active-site residue. 144-145 (GT) provides a ligand contact to (S)-2,3,4,5-tetrahydrodipicolinate.

This sequence belongs to the DapB family.

Its subcellular location is the cytoplasm. The catalysed reaction is (S)-2,3,4,5-tetrahydrodipicolinate + NAD(+) + H2O = (2S,4S)-4-hydroxy-2,3,4,5-tetrahydrodipicolinate + NADH + H(+). It catalyses the reaction (S)-2,3,4,5-tetrahydrodipicolinate + NADP(+) + H2O = (2S,4S)-4-hydroxy-2,3,4,5-tetrahydrodipicolinate + NADPH + H(+). It participates in amino-acid biosynthesis; L-lysine biosynthesis via DAP pathway; (S)-tetrahydrodipicolinate from L-aspartate: step 4/4. Functionally, catalyzes the conversion of 4-hydroxy-tetrahydrodipicolinate (HTPA) to tetrahydrodipicolinate. The sequence is that of 4-hydroxy-tetrahydrodipicolinate reductase from Chlorobium limicola (strain DSM 245 / NBRC 103803 / 6330).